The following is a 123-amino-acid chain: Thioredoxin domain-containing protein 17 (123 aa).

A Thioredoxin domain is found at 41 to 123 (SWCPDCVKAE…DLVRMMFTED (83 aa)). Active-site nucleophile residues include Cys-43 and Cys-46. A disulfide bridge connects residues Cys-43 and Cys-46.

This sequence belongs to the thioredoxin family.

Its subcellular location is the cytoplasm. Disulfide reductase. May participate in various redox reactions through the reversible oxidation of its active center dithiol to a disulfide and catalyze dithiol-disulfide exchange reactions. Has peroxidase activity and may contribute to the elimination of cellular hydrogen peroxide. This chain is Thioredoxin domain-containing protein 17 (txndc17), found in Danio rerio (Zebrafish).